We begin with the raw amino-acid sequence, 372 residues long: Partitioning defective 6 homolog beta (372 aa).

The residue at position 11 (Ser-11) is a Phosphoserine. The PB1 domain occupies 16–96 (TMEVKSKFGA…PLLRIFIQKK (81 aa)). The interaction with PARD3 and CDC42 stretch occupies residues 126 to 253 (RKKPHIVISM…ITVRPANQRN (128 aa)). Positions 133 to 150 (ISMPQDFRPVSSIIDVDI) constitute a Pseudo-CRIB domain. The PDZ domain occupies 157 to 250 (RVRLYKYGTE…NLIITVRPAN (94 aa)). Residues 253–272 (NNVVRNSRTSGSSGQSTDNS) are compositionally biased toward polar residues. Positions 253–292 (NNVVRNSRTSGSSGQSTDNSLLGYPQQIEPSFEPEDEDSE) are disordered.

Belongs to the PAR6 family. Interacts with PARD3. Interacts with GTP-bound forms of CDC42 and RAC1. Interacts with GTP-bound RHOQ/TC10. Interacts with PALS1. Interacts with the N-terminal part of PRKCI and PRKCZ. Part of a complex with PARD3, CDC42 or RAC1 and PRKCI or PRKCZ. Part of a complex with LLGL1 and PRKCI. Interacts with PARD3B. Interacts with ECT2. Expressed in pancreas and in both adult and fetal kidney. Weakly expressed in placenta and lung. Not expressed in other tissues.

It localises to the cytoplasm. The protein localises to the cell membrane. The protein resides in the cell junction. Its subcellular location is the tight junction. Its function is as follows. Adapter protein involved in asymmetrical cell division and cell polarization processes. Probably involved in formation of epithelial tight junctions. Association with PARD3 may prevent the interaction of PARD3 with F11R/JAM1, thereby preventing tight junction assembly. The PARD6-PARD3 complex links GTP-bound Rho small GTPases to atypical protein kinase C proteins. The chain is Partitioning defective 6 homolog beta (PARD6B) from Homo sapiens (Human).